A 795-amino-acid chain; its full sequence is Endoplasmin (795 aa).

The first 21 residues, 1-21, serve as a signal peptide directing secretion; sequence MKSAWALALACTLLLAASVTA. An SRT pseudosubstrate motif motif is present at residues 41-43; sequence SRT. N-linked (GlcNAc...) asparagine glycosylation is found at Asn61 and Asn106. ATP is bound by residues Asn106, Asp148, Asn161, and Phe198. N-linked (GlcNAc...) asparagine glycosylation occurs at Asn216. Residues 289–316 show a composition bias toward acidic residues; sequence EEPVEEEEAKEEKEETDDNEAAVEEEEE. The segment at 289–322 is disordered; sequence EEPVEEEEAKEEKEETDDNEAAVEEEEEEKKPKT. N-linked (GlcNAc...) asparagine glycosylation is found at Asn444, Asn480, and Asn501. Residues 751–795 are disordered; that stretch reads DAKVEEEPEEPEDAAEEAEQDEEEVDADAEDSETQKESTDVKDEL. A compositionally biased stretch (acidic residues) spans 756–782; the sequence is EEPEEPEDAAEEAEQDEEEVDADAEDS. Basic and acidic residues predominate over residues 783–795; it reads ETQKESTDVKDEL. Positions 792–795 match the Prevents secretion from ER motif; sequence KDEL.

The protein belongs to the heat shock protein 90 family. In terms of assembly, homodimer; disulfide-linked.

The protein resides in the endoplasmic reticulum lumen. The protein localises to the sarcoplasmic reticulum lumen. It carries out the reaction ATP + H2O = ADP + phosphate + H(+). Functionally, ATP-dependent chaperone involved in the processing of proteins in the endoplasmic reticulum, regulating their transport. The polypeptide is Endoplasmin (HSP90B1) (Gallus gallus (Chicken)).